Reading from the N-terminus, the 309-residue chain is Dihydroorotate dehydrogenase B (NAD(+)), catalytic subunit (309 aa).

FMN contacts are provided by residues serine 21 and 45 to 46; that span reads KA. Substrate is bound by residues lysine 45 and 69 to 73; that span reads NAIGL. Residues asparagine 99 and asparagine 127 each coordinate FMN. Substrate is bound at residue asparagine 127. The active-site Nucleophile is the cysteine 130. 2 residues coordinate FMN: lysine 165 and isoleucine 191. 192 to 193 contacts substrate; sequence NT. FMN contacts are provided by residues glycine 217, 243 to 244, and 265 to 266; these read GG and GT.

Belongs to the dihydroorotate dehydrogenase family. Type 1 subfamily. As to quaternary structure, heterotetramer of 2 PyrK and 2 PyrD type B subunits. FMN is required as a cofactor.

It is found in the cytoplasm. The catalysed reaction is (S)-dihydroorotate + NAD(+) = orotate + NADH + H(+). The protein operates within pyrimidine metabolism; UMP biosynthesis via de novo pathway; orotate from (S)-dihydroorotate (NAD(+) route): step 1/1. In terms of biological role, catalyzes the conversion of dihydroorotate to orotate with NAD(+) as electron acceptor. The chain is Dihydroorotate dehydrogenase B (NAD(+)), catalytic subunit (pyrD) from Bacillus cereus (strain ATCC 14579 / DSM 31 / CCUG 7414 / JCM 2152 / NBRC 15305 / NCIMB 9373 / NCTC 2599 / NRRL B-3711).